A 727-amino-acid chain; its full sequence is Glucans biosynthesis glucosyltransferase H (727 aa).

Positions 18-41 (SAMPNERPGAMEPQKLSKMPEGFP) are disordered. A run of 7 helical transmembrane segments spans residues 58-78 (FLVV…MGAV), 97-117 (VNFC…LILL), 278-298 (LQQF…GWWV), 408-428 (IMAY…LMLA), 460-480 (LFYI…LLLL), 496-516 (IFSV…MMFI), and 572-592 (LLAW…ISAW).

It belongs to the glycosyltransferase 2 family. OpgH subfamily.

Its subcellular location is the cell inner membrane. The protein operates within glycan metabolism; osmoregulated periplasmic glucan (OPG) biosynthesis. In terms of biological role, involved in the biosynthesis of osmoregulated periplasmic glucans (OPGs). The sequence is that of Glucans biosynthesis glucosyltransferase H from Shewanella baltica (strain OS155 / ATCC BAA-1091).